A 386-amino-acid polypeptide reads, in one-letter code: Succinate--CoA ligase [ADP-forming] subunit beta (386 aa).

The ATP site is built by K46, E99, A102, and E107. The Mg(2+) site is built by N199 and D213. Substrate contacts are provided by residues N264 and 321 to 323 (GIM).

The protein belongs to the succinate/malate CoA ligase beta subunit family. In terms of assembly, heterotetramer of two alpha and two beta subunits. Mg(2+) is required as a cofactor.

The catalysed reaction is succinate + ATP + CoA = succinyl-CoA + ADP + phosphate. It catalyses the reaction GTP + succinate + CoA = succinyl-CoA + GDP + phosphate. The protein operates within carbohydrate metabolism; tricarboxylic acid cycle; succinate from succinyl-CoA (ligase route): step 1/1. Succinyl-CoA synthetase functions in the citric acid cycle (TCA), coupling the hydrolysis of succinyl-CoA to the synthesis of either ATP or GTP and thus represents the only step of substrate-level phosphorylation in the TCA. The beta subunit provides nucleotide specificity of the enzyme and binds the substrate succinate, while the binding sites for coenzyme A and phosphate are found in the alpha subunit. This chain is Succinate--CoA ligase [ADP-forming] subunit beta, found in Orientia tsutsugamushi (strain Ikeda) (Rickettsia tsutsugamushi).